The following is a 2188-amino-acid chain: Phenolphthiocerol/phthiocerol polyketide synthase subunit C (2188 aa).

Residues 34-462 enclose the Ketosynthase family 3 (KS3) domain; sequence SEPIAVIGMG…GTNAHVVIEQ (429 aa). Catalysis depends on for beta-ketoacyl synthase activity residues Cys210, His345, and His384. Residues 572-890 are acyltransferase; that stretch reads VFVYSGRGSQ…NLNTTHTTHP (319 aa). The For malonyltransferase activity role is filled by Ser660. An N-terminal hotdog fold region spans residues 928–1050; sequence HPLLGVGVTD…ATVARAEPLA (123 aa). The segment at 928–1093 is dehydratase; the sequence is HPLLGVGVTD…QQHGPAFQGI (166 aa). Residues 928–1223 enclose the PKS/mFAS DH domain; sequence HPLLGVGVTD…MAVLGSGSGA (296 aa). The Proton acceptor; for dehydratase activity role is filled by His959. The C-terminal hotdog fold stretch occupies residues 1067–1223; sequence EDQLDPDDLY…MAVLGSGSGA (157 aa). The active-site Proton donor; for dehydratase activity is the Asp1129. The segment at 1467-1778 is enoylreductase; that stretch reads GRLDALNVHE…SGKHTGKIVI (312 aa). The segment at 1802-1981 is beta-ketoacyl reductase; the sequence is GGYLIVGGMG…GINWGPWADV (180 aa). 1803-1848 contacts NADP(+); the sequence is GYLIVGGMGGLGFVVARWLAEQGAGLIVLNGRSAPSDEVAAAIAEL. One can recognise a Carrier domain in the interval 2069 to 2145; that stretch reads ERPGHLASAI…DLATALCERM (77 aa). Ser2105 carries the post-translational modification O-(pantetheine 4'-phosphoryl)serine.

Homodimer. It depends on NADP(+) as a cofactor. Pantetheine 4'-phosphate is required as a cofactor.

It catalyses the reaction icosanoyl-[(phenol)carboxyphthiodiolenone synthase] + 2 (S)-methylmalonyl-CoA + 3 malonyl-CoA + 5 NADPH + 10 H(+) = C32-carboxyphthiodiolenone-[(phenol)carboxyphthiodiolenone synthase] + 5 CO2 + 5 NADP(+) + 5 CoA + 2 H2O. It carries out the reaction docosanoyl-[(phenol)carboxyphthiodiolenone synthase] + 2 (S)-methylmalonyl-CoA + 3 malonyl-CoA + 5 NADPH + 10 H(+) = C34-carboxyphthiodiolenone-[(phenol)carboxyphthiodiolenone synthase] + 5 CO2 + 5 NADP(+) + 5 CoA + 2 H2O. The catalysed reaction is 17-(4-hydroxyphenyl)heptadecanoyl-[(phenol)carboxyphthiodiolenone synthase] + 2 (S)-methylmalonyl-CoA + 3 malonyl-CoA + 5 NADPH + 10 H(+) = C35-(phenol)carboxyphthiodiolenone-[(phenol)carboxyphthiodiolenone synthase] + 5 CO2 + 5 NADP(+) + 5 CoA + 2 H2O. The enzyme catalyses 19-(4-hydroxyphenyl)nonadecanoyl-[(phenol)carboxyphthiodiolenone synthase] + 2 (S)-methylmalonyl-CoA + 3 malonyl-CoA + 5 NADPH + 10 H(+) = C37-(phenol)carboxyphthiodiolenone-[(phenol)carboxyphthiodiolenone synthase] + 5 CO2 + 5 NADP(+) + 5 CoA + 2 H2O. It functions in the pathway lipid metabolism; fatty acid biosynthesis. Functionally, part of the PpsABCDE complex involved in the biosynthesis of the lipid core common to phthiocerols and phenolphthiocerols by successive additions of malonyl-CoA or methylmalonyl-CoA extender units. PpsA can accept as substrate the activated forms of either icosanoyl (C20), docosanoyl (C22) or lignoceroyl (C24) groups from FadD26, or a (4-hydroxyphenyl)-C17 or (4-hydroxyphenyl)-C19 fatty acyl from FadD29. PpsA initiates the biosynthesis and extends its substrate using a malonyl-CoA extender unit. The PpsB and PpsC proteins add the second and third malonyl-CoA extender units. PpsD adds an (R)-methylmalonyl unit and PpsE adds a second (R)-methylmalonyl unit. The incorporation of the methylmalonyl units results in formation of two branched methyl groups in the elongated product. The polypeptide is Phenolphthiocerol/phthiocerol polyketide synthase subunit C (ppsC) (Mycobacterium bovis (strain ATCC BAA-935 / AF2122/97)).